Here is a 314-residue protein sequence, read N- to C-terminus: uncharacterized protein (314 aa).

A run of 2 helical transmembrane segments spans residues 23–43 (LALGPVHPGGPTLIDLLMALF) and 98–118 (MASGIGGALSGALGGVMGPLT). The span at 165–184 (GLGSGAGGGDVGGGGAGGTT) shows a compositional bias: gly residues. The tract at residues 165-314 (GLGSGAGGGD…APDEKTDAGE (150 aa)) is disordered. The span at 190 to 202 (GPPPVPTSSPPTT) shows a compositional bias: pro residues. Low complexity-rich tracts occupy residues 203-212 (PAGAPTKSAT) and 219-232 (ASPASAHMGAAGMP). Residues 221-241 (PASAHMGAAGMPMVPPGAMGA) form a helical membrane-spanning segment. Basic and acidic residues predominate over residues 294–314 (LLPEHKDFGRIAPDEKTDAGE).

Its subcellular location is the cell membrane. This is an uncharacterized protein from Mycobacterium tuberculosis (strain CDC 1551 / Oshkosh).